Here is a 1193-residue protein sequence, read N- to C-terminus: K(+) efflux antiporter 1, chloroplastic (1193 aa).

Residues 1-49 (MEYASTFQRPILFHGGDGASYCFPNRLISPKGISITSGDSKVHSCFRLR) constitute a chloroplast transit peptide. Topologically, residues 50–585 (RNVAQSGTLN…MIPHQEVNEE (536 aa)) are stromal. The segment at 103–135 (SLGNADSNDHRIGESSESSDETEATDLKDARVE) is disordered. Residues 131 to 355 (DARVENDTDS…RAEKSLSISQ (225 aa)) adopt a coiled-coil conformation. Lysine 168 carries the post-translational modification N6-acetyllysine; by NSI. Positions 351 to 364 (LSISQTPEETQGQL) are enriched in polar residues. 2 disordered regions span residues 351–372 (LSIS…TSQE) and 421–474 (QPYE…NSPK). Residues 439-465 (KVVEADSEKPKINVQTKKQETQKDLPK) are compositionally biased toward basic and acidic residues. The helical transmembrane segment at 586-606 (EASLFDFLWLLLASVIFVPLF) threads the bilayer. Residues 607–612 (QKIPGG) are Chloroplast intermembrane-facing. A helical membrane pass occupies residues 613 to 633 (SPVLGYLAAGILIGPYGLSII). At 634 to 640 (RNVHGTR) the chain is on the stromal side. Residues 641 to 661 (AIAEFGVVFLLFNIGLELSVE) traverse the membrane as a helical segment. At 662–668 (RLSSMKK) the chain is on the chloroplast intermembrane side. The helical transmembrane segment at 669–689 (YVFGLGSAQVLVTAAVVGLLA) threads the bilayer. Residues 690–698 (HYVAGQAGP) lie on the Stromal side of the membrane. Residues 699–719 (AAIVIGNGLALSSTAVVLQVL) traverse the membrane as a helical segment. The Chloroplast intermembrane segment spans residues 720–733 (QERGESTSRHGRAS). Residues 734 to 754 (FSVLLFQDLAVVVLLILIPLI) traverse the membrane as a helical segment. At 755 to 766 (SPNSSKGGIGFQ) the chain is on the stromal side. Residues 767 to 787 (AIAEALGLAAVKAAVAITAII) traverse the membrane as a helical segment. Residues 788 to 827 (AGGRLLLRPIYKQIAENRNAEIFSANTLLVILGTSLLTAR) are Chloroplast intermembrane-facing. Residues 828-848 (AGLSMALGAFLAGLLLAETEF) traverse the membrane as a helical segment. The Stromal portion of the chain corresponds to 849 to 860 (SLQVESDIAPYR). The chain crosses the membrane as a helical span at residues 861-881 (GLLLGLFFMTVGMSIDPKLLL). Residues 882–883 (SN) lie on the Chloroplast intermembrane side of the membrane. Residues 884–904 (FPVIVGTLGLLIVGKTMLVVI) traverse the membrane as a helical segment. Topologically, residues 905–912 (MGKLFGIS) are stromal. Residues 913–933 (IISAIRVGLLLAPGGEFAFVA) form a helical membrane-spanning segment. Topologically, residues 934–948 (FGEAVNQGIMSPQLS) are chloroplast intermembrane. A helical membrane pass occupies residues 949–969 (SLLFLVVGISMAITPWLAAGG). The Stromal portion of the chain corresponds to 970–1193 (QLIASRFELH…QIIEGGTVVI (224 aa)). The RCK N-terminal domain occupies 995-1112 (QGHIIICGFG…EKAGATAVVP (118 aa)). The interval 1165–1184 (GYSRTSKPKPQPSDASGDNQ) is disordered.

This sequence belongs to the monovalent cation:proton antiporter 2 (CPA2) transporter (TC 2.A.37) family. KEA (TC 2.A.37.1) subfamily. Acetylated at Lys-168 by the stromal acetyltransferase enzyme NSI. As to expression, expressed in shoots and roots. Mainly localized to leaf veins, hypocotyls, mesophylls and guard cells. Accumulates at high levels in small and dividing plastids (at protein level).

It localises to the plastid. The protein localises to the chloroplast inner membrane. It catalyses the reaction K(+)(in) + H(+)(out) = K(+)(out) + H(+)(in). Repressed by sodium ions Na(+). Electroneutral K(+)/H(+) efflux antiporter involved in chloroplastic K(+) homeostasis and osmotic adjustment, especially during plastid division and thylakoid membrane formation. Collaboratively with KEA2, adjusts alkaline stromal pH upon light to dark transitions in plastids. Together with KEA2, critical for chloroplast development, including chloroplast RNA-metabolism (e.g. rRNA maturation, polysome loading and RNA-protein interactions) and plastid gene expression (PGE), ion homeostasis, and photosynthesis. Contributes, during early seedling development, to the regulation of photosynthesis and abscisic acid- (ABA-) mediated primary root growth in a sucrose-dependent manner. Involved in the regulation of reactive oxygen and nitrogen species (ROS and RNS) metabolism. Required in roots for rapid hyperosmotic-induced Ca(2+) responses and for osmo-sensory potentiation in hyperosmotic conditions. May counteract resilience to drought and salt stress, involving photorespiratory pathway and stomata closure. The sequence is that of K(+) efflux antiporter 1, chloroplastic from Arabidopsis thaliana (Mouse-ear cress).